The following is a 328-amino-acid chain: NADH-quinone oxidoreductase subunit H (328 aa).

8 helical membrane passes run 8 to 28 (VAAI…AVGA), 81 to 101 (GLFV…FMVI), 114 to 134 (IGLL…LFAG), 154 to 174 (LSYE…AGSF), 186 to 206 (LWFI…GIAV), 237 to 257 (FFVG…TLFL), 265 to 285 (LPPI…FILL), and 304 to 324 (VCLP…LIFS).

The protein belongs to the complex I subunit 1 family. In terms of assembly, NDH-1 is composed of 14 different subunits. Subunits NuoA, H, J, K, L, M, N constitute the membrane sector of the complex.

It is found in the cell inner membrane. It carries out the reaction a quinone + NADH + 5 H(+)(in) = a quinol + NAD(+) + 4 H(+)(out). Its function is as follows. NDH-1 shuttles electrons from NADH, via FMN and iron-sulfur (Fe-S) centers, to quinones in the respiratory chain. The immediate electron acceptor for the enzyme in this species is believed to be ubiquinone. Couples the redox reaction to proton translocation (for every two electrons transferred, four hydrogen ions are translocated across the cytoplasmic membrane), and thus conserves the redox energy in a proton gradient. This subunit may bind ubiquinone. The chain is NADH-quinone oxidoreductase subunit H from Chromohalobacter salexigens (strain ATCC BAA-138 / DSM 3043 / CIP 106854 / NCIMB 13768 / 1H11).